The sequence spans 790 residues: Protein SEY1 (790 aa).

The Cytoplasmic portion of the chain corresponds to 1–692 (MELSEGELSH…KRSIVQHITQ (692 aa)). One can recognise a GB1/RHD3-type G domain in the interval 55 to 284 (GNNYHIISVF…VSNELFKPEY (230 aa)). 65-72 (GSQSTGKS) contacts GTP. Residues 693 to 713 (IPYYIYLIILVLGWNEFMAII) form a helical membrane-spanning segment. Over 714 to 716 (RNP) the chain is Lumenal. A helical membrane pass occupies residues 717 to 737 (LFFSLSIVLGATVYVLYYLGL). Over 738–790 (LRPALVVAQRTMDEVIVMAKTKLREVLIDDHEVTGRQLNKMAGSKENIELDDM) the chain is Cytoplasmic.

It belongs to the TRAFAC class dynamin-like GTPase superfamily. GB1/RHD3 GTPase family. RHD3 subfamily.

It is found in the endoplasmic reticulum membrane. Its function is as follows. Cooperates with the reticulon proteins and tubule-shaping DP1 family proteins to generate and maintain the structure of the tubular endoplasmic reticulum network. Has GTPase activity, which is required for its function in ER organization. The sequence is that of Protein SEY1 from Candida albicans (strain WO-1) (Yeast).